Here is a 409-residue protein sequence, read N- to C-terminus: Autophagy-related protein 37 (409 aa).

Residues 1 to 313 (MSESIDRVFV…LKLIKTVIKH (313 aa)) lie on the Cytoplasmic side of the membrane. The ACB domain maps to 5 to 103 (IDRVFVKAIG…LIDTMKQFAS (99 aa)). Residues 314–334 (VAIDAVIIAVLVAVIKRSIII) form a helical membrane-spanning segment. At 335 to 409 (PNLISNEISL…VSRIRLIKRN (75 aa)) the chain is on the peroxisomal side.

The protein belongs to the ATG37 family. Interacts with ATG30 and PEX3. In terms of processing, phosphorylated.

Its subcellular location is the peroxisome membrane. In terms of biological role, acyl-CoA binding protein which acts as the peroxisome receptor for pexophagy. Required for both micropexophagy and macropexophagy, but not for the cytoplasm to vacuole transport (Cvt) or autophagy pathways. Required for functional micropexophagic apparatus (MIPA) and relocation of ATG11 to the peroxisome-sequestering arms of the vacuole. Binds palmitoyl-CoA but not oleyl-CoA. In Komagataella phaffii (strain GS115 / ATCC 20864) (Yeast), this protein is Autophagy-related protein 37.